The following is a 311-amino-acid chain: tRNA (guanine-N(7)-)-methyltransferase (311 aa).

S-adenosyl-L-methionine contacts are provided by Glu-28, Glu-53, and Asp-103. Residue Asp-103 is part of the active site. Positions 107 and 139 each coordinate substrate.

This sequence belongs to the class I-like SAM-binding methyltransferase superfamily. TrmB family.

The catalysed reaction is guanosine(46) in tRNA + S-adenosyl-L-methionine = N(7)-methylguanosine(46) in tRNA + S-adenosyl-L-homocysteine. The protein operates within tRNA modification; N(7)-methylguanine-tRNA biosynthesis. In terms of biological role, catalyzes the formation of N(7)-methylguanine at position 46 (m7G46) in tRNA. The chain is tRNA (guanine-N(7)-)-methyltransferase from Thermus thermophilus (strain ATCC BAA-163 / DSM 7039 / HB27).